The sequence spans 250 residues: Flavin-dependent thymidylate synthase (250 aa).

Positions 7 to 233 (LSVELIACSS…PTVFGDFEIE (227 aa)) constitute a ThyX domain. DUMP contacts are provided by residues 92–95 (ELVR), 103–107 (QLSQR), and Arg-172. FAD-binding positions include 95–97 (RHR) and Gln-103. The short motif at 95 to 105 (RHRHFSFSQLS) is the ThyX motif element. FAD contacts are provided by residues 188–190 (NFR) and His-194. Arg-199 contacts dUMP. Residue Arg-199 is the Involved in ionization of N3 of dUMP, leading to its activation of the active site.

Belongs to the thymidylate synthase ThyX family. In terms of assembly, homotetramer. FAD is required as a cofactor.

It carries out the reaction dUMP + (6R)-5,10-methylene-5,6,7,8-tetrahydrofolate + NADPH + H(+) = dTMP + (6S)-5,6,7,8-tetrahydrofolate + NADP(+). It functions in the pathway pyrimidine metabolism; dTTP biosynthesis. Functionally, catalyzes the reductive methylation of 2'-deoxyuridine-5'-monophosphate (dUMP) to 2'-deoxythymidine-5'-monophosphate (dTMP) while utilizing 5,10-methylenetetrahydrofolate (mTHF) as the methyl donor, and NADPH and FADH(2) as the reductant. In Corynebacterium glutamicum (strain ATCC 13032 / DSM 20300 / JCM 1318 / BCRC 11384 / CCUG 27702 / LMG 3730 / NBRC 12168 / NCIMB 10025 / NRRL B-2784 / 534), this protein is Flavin-dependent thymidylate synthase.